The following is a 149-amino-acid chain: Putative inactive group IIC secretory phospholipase A2 (149 aa).

The signal sequence occupies residues 1-18 (MKVIAILTLLLFCSPTHS). Disulfide bonds link Cys-44–Cys-142, Cys-77–Cys-107, Cys-95–Cys-112, and Cys-97–Cys-105. Residues Tyr-45, Gly-47, and Gly-49 each contribute to the Ca(2+) site.

Belongs to the phospholipase A2 family. Ca(2+) serves as cofactor.

Its subcellular location is the secreted. Its function is as follows. Inactive phospholipase. In Homo sapiens (Human), this protein is Putative inactive group IIC secretory phospholipase A2 (PLA2G2C).